The chain runs to 84 residues: Beta-cardiotoxin CTX21 (84 aa).

A signal peptide spans 1–21 (MKTLLLTLVVVTIVCLDLGYT). Cystine bridges form between Cys-24-Cys-43, Cys-36-Cys-61, Cys-65-Cys-76, and Cys-77-Cys-82.

It belongs to the three-finger toxin family. Short-chain subfamily. Aminergic toxin sub-subfamily. In terms of tissue distribution, expressed by the venom gland.

Its subcellular location is the secreted. In terms of biological role, acts as a beta-blocker by binding to beta-1 and beta-2 adrenergic receptors (ADRB1 and ADRB2). It dose-dependently decreases the heart rate (bradycardia), whereas conventional cardiotoxins increases it. At 100 mg/kg, intraperitoneal injection into mice provokes labored breathing, impaired locomotion, lack of response to external stimuli, and death (after 30 minutes). The polypeptide is Beta-cardiotoxin CTX21 (Ophiophagus hannah (King cobra)).